The chain runs to 328 residues: MFGRTLFPARVIALGSGLFRTPLRTLAAGPALSIGGIYPPIATPFTDKEEVDYGKLHENLQNYSSFPFRGFVVQGSNGEYAYLTREERLEVVRRVRQAVPKEKLIMAGSGCESTQATIEMTVEMAQSGADAVLVVTPSYYRGKMTSSALVHHYTKVADHSPVPVVLYSVPANTGLDLPVDAVVTLSQHPNIIGLKDSGGDITRIGLIIHKTKHLGFQVLSGSAGFLLAGYSVGAVGGVCALANVLGAQVCELERLCLNGRWQEAKELQYRLIEPNTAVTRKFGIPGLKQAMEWFGFNGGKCRSPLLPLTEQEIKELRHIFTVNGWLSL.

The N-terminal 26 residues, 1–26 (MFGRTLFPARVIALGSGLFRTPLRTL), are a transit peptide targeting the mitochondrion. 76 to 77 (SN) provides a ligand contact to substrate. Residue lysine 195 is the Schiff-base intermediate with substrate of the active site. Residues serine 197 and glycine 221 each contribute to the substrate site.

This sequence belongs to the DapA family. As to quaternary structure, homotetramer.

The protein resides in the mitochondrion. The catalysed reaction is (4S)-4-hydroxy-2-oxoglutarate = glyoxylate + pyruvate. The enzyme catalyses (4R)-4-hydroxy-2-oxoglutarate = glyoxylate + pyruvate. Its activity is regulated as follows. Inhibited by divalent cations. Its function is as follows. Catalyzes the final step in the metabolic pathway of hydroxyproline. This chain is 4-hydroxy-2-oxoglutarate aldolase, mitochondrial (hoga1), found in Xenopus tropicalis (Western clawed frog).